The following is a 313-amino-acid chain: Uracil-DNA glycosylase (313 aa).

The span at 1-12 shows a compositional bias: polar residues; that stretch reads MIGQKTLYSFFS. The interval 1–25 is interaction with FAM72A; that stretch reads MIGQKTLYSFFSPSPARKRHAPSPE. Residues 1–29 are mitochondrial localization signal; it reads MIGQKTLYSFFSPSPARKRHAPSPEPAVQ. Positions 1–68 are disordered; sequence MIGQKTLYSF…GTPPSSPLSA (68 aa). Phosphoserine occurs at positions 12 and 14. The short motif at 17 to 19 is the Important for nuclear sorting element; it reads RKR. S23 is modified (phosphoserine). Residues 43 to 53 show a composition bias toward low complexity; the sequence is AAAIPAKKAPA. The residue at position 60 (T60) is a Phosphothreonine. A Phosphoserine modification is found at S64. Positions 73-88 are interaction with RPA2; it reads RIQRNKAAALLRLAAR. Residue Q153 coordinates uracil. Catalysis depends on D154, which acts as the Proton acceptor. H157 is a dsDNA binding site. F167 contacts uracil. S178 serves as a coordination point for dsDNA. N213 lines the uracil pocket. DsDNA is bound by residues S256, H277, S279, S282, and R285. Residue H277 coordinates uracil. Residue K295 is modified to N6-acetyllysine.

The protein belongs to the uracil-DNA glycosylase (UDG) superfamily. UNG family. As to quaternary structure, monomer. Interacts with RPA2 subunit of the RPA trimer; this interaction mediates UNG2 recruitment to RPA-coated single-stranded DNA at stalled replication forks. Interacts with PCNA; this interaction mediates UNG2 recruitment to S-phase replication foci. Interacts (via N-terminus) with FAM72A. In terms of assembly, (Microbial infection) Interacts with HIV-1 Vpr. In terms of processing, processed by mitochondrial serine or cysteine peptidases to yield a mature dominant form that lacks N-terminal 29 amino acid residues and another minor form that lacks N-terminal 77 amino acid residues. The catalytic activity of UNG1 delta29 is not product-inhibited by AP sites.

The protein localises to the mitochondrion. It localises to the nucleus. The catalysed reaction is Hydrolyzes single-stranded DNA or mismatched double-stranded DNA and polynucleotides, releasing free uracil.. It catalyses the reaction a 2'-deoxyuridine in single-stranded DNA + H2O = a 2'-deoxyribose 5'-monophosphate in single-stranded DNA + uracil. It carries out the reaction a 2'-deoxyuridine in double-stranded DNA + H2O = a 2'-deoxyribose 5'-monophosphate in double-stranded DNA + uracil. In terms of biological role, uracil-DNA glycosylase that hydrolyzes the N-glycosidic bond between uracil and deoxyribose in single- and double-stranded DNA (ssDNA and dsDNA) to release a free uracil residue and form an abasic (apurinic/apyrimidinic; AP) site. Excises uracil residues arising as a result of misincorporation of dUMP residues by DNA polymerase during replication or due to spontaneous or enzymatic deamination of cytosine. Mediates error-free base excision repair (BER) of uracil at replication forks. According to the model, it is recruited by PCNA to S-phase replication forks to remove misincorporated uracil at U:A base mispairs in nascent DNA strands. Via trimeric RPA it is recruited to ssDNA stretches ahead of the polymerase to allow detection and excision of deaminated cytosines prior to replication. The resultant AP sites temporarily stall replication, allowing time to repair the lesion. Mediates mutagenic uracil processing involved in antibody affinity maturation. Processes AICDA-induced U:G base mispairs at variable immunoglobulin (Ig) regions leading to the generation of transversion mutations. Operates at switch sites of Ig constant regions where it mediates Ig isotype class switch recombination. Excises AICDA-induced uracil residues forming AP sites that are subsequently nicked by APEX1 endonuclease. The accumulation of staggered nicks in opposite strands results in double strand DNA breaks that are finally resolved via non-homologous end joining repair pathway. The chain is Uracil-DNA glycosylase from Homo sapiens (Human).